The primary structure comprises 1814 residues: U3 small nucleolar RNA-associated protein 10 (1814 aa).

The HEAT 1 repeat unit spans residues 583 to 620 (LDFQALLPFLLVALTDASERVRREAAAALAAVGSLYKK). Helical transmembrane passes span 942–962 (IQSG…AIVN) and 998–1018 (ALLL…HSVM). 4 HEAT repeats span residues 1042-1079 (QTID…AFEH), 1249-1286 (LTLV…QNPE), 1293-1331 (IRVL…KYGK), and 1770-1807 (ALLP…VLGE).

The protein belongs to the HEATR1/UTP10 family. Component of the ribosomal small subunit (SSU) processome.

It localises to the nucleus. The protein resides in the nucleolus. Its subcellular location is the membrane. In terms of biological role, involved in nucleolar processing of pre-18S ribosomal RNA. Involved in ribosome biosynthesis. This Neosartorya fischeri (strain ATCC 1020 / DSM 3700 / CBS 544.65 / FGSC A1164 / JCM 1740 / NRRL 181 / WB 181) (Aspergillus fischerianus) protein is U3 small nucleolar RNA-associated protein 10.